A 286-amino-acid chain; its full sequence is MADDSELYPRFFKVFLVESASESLMIPLPFMAFLADPLPKTVKLQGLGGKLWTVSLKKISGAAYLTRGWPKFAEEHELKNGEFMTFVYDGHRTFEVSVFDRWGSKEVRAEIQAIPLSDSDSDSVVEDEKDSTDVVEDDDDEDEDEDEDDDGSFDEDEEISQSLYPIDEETATDAAVFEGNLDVEALTNPHFPTTLKNRIYELLIPANVVKDNNLEFGSSIKYIDGEGTLVGLRGKWADKRVCFKGWDRICRRNRLKKHQDTVECELLHDDQKMVHSIRVHVLRRDA.

The segment at residues 9-102 is a DNA-binding region (TF-B3); that stretch reads PRFFKVFLVE…TFEVSVFDRW (94 aa). The disordered stretch occupies residues 117–161; the sequence is SDSDSDSVVEDEKDSTDVVEDDDDEDEDEDEDDDGSFDEDEEISQ. Residues 119–159 are compositionally biased toward acidic residues; the sequence is SDSDSVVEDEKDSTDVVEDDDDEDEDEDEDDDGSFDEDEEI.

It is found in the nucleus. The sequence is that of B3 domain-containing protein REM20 (REM20) from Arabidopsis thaliana (Mouse-ear cress).